A 226-amino-acid chain; its full sequence is Large ribosomal subunit protein uL1 (226 aa).

This sequence belongs to the universal ribosomal protein uL1 family. In terms of assembly, part of the 50S ribosomal subunit.

Its function is as follows. Binds directly to 23S rRNA. Probably involved in E site tRNA release. Functionally, protein L1 is also a translational repressor protein, it controls the translation of its operon by binding to its mRNA. The sequence is that of Large ribosomal subunit protein uL1 from Korarchaeum cryptofilum (strain OPF8).